The following is a 473-amino-acid chain: Glycogen synthase (473 aa).

An ADP-alpha-D-glucose-binding site is contributed by lysine 15.

The protein belongs to the glycosyltransferase 1 family. Bacterial/plant glycogen synthase subfamily.

The catalysed reaction is [(1-&gt;4)-alpha-D-glucosyl](n) + ADP-alpha-D-glucose = [(1-&gt;4)-alpha-D-glucosyl](n+1) + ADP + H(+). It functions in the pathway glycan biosynthesis; glycogen biosynthesis. Functionally, synthesizes alpha-1,4-glucan chains using ADP-glucose. This Flavobacterium johnsoniae (strain ATCC 17061 / DSM 2064 / JCM 8514 / BCRC 14874 / CCUG 350202 / NBRC 14942 / NCIMB 11054 / UW101) (Cytophaga johnsonae) protein is Glycogen synthase.